A 619-amino-acid polypeptide reads, in one-letter code: Dihydroxy-acid dehydratase (619 aa).

Aspartate 81 is a Mg(2+) binding site. Cysteine 122 provides a ligand contact to [2Fe-2S] cluster. The Mg(2+) site is built by aspartate 123 and lysine 124. Lysine 124 carries the N6-carboxylysine modification. Cysteine 195 contributes to the [2Fe-2S] cluster binding site. Mg(2+) is bound at residue glutamate 494. Serine 520 (proton acceptor) is an active-site residue.

The protein belongs to the IlvD/Edd family. As to quaternary structure, homodimer. The cofactor is [2Fe-2S] cluster. It depends on Mg(2+) as a cofactor.

It carries out the reaction (2R)-2,3-dihydroxy-3-methylbutanoate = 3-methyl-2-oxobutanoate + H2O. The catalysed reaction is (2R,3R)-2,3-dihydroxy-3-methylpentanoate = (S)-3-methyl-2-oxopentanoate + H2O. Its pathway is amino-acid biosynthesis; L-isoleucine biosynthesis; L-isoleucine from 2-oxobutanoate: step 3/4. It participates in amino-acid biosynthesis; L-valine biosynthesis; L-valine from pyruvate: step 3/4. Functions in the biosynthesis of branched-chain amino acids. Catalyzes the dehydration of (2R,3R)-2,3-dihydroxy-3-methylpentanoate (2,3-dihydroxy-3-methylvalerate) into 2-oxo-3-methylpentanoate (2-oxo-3-methylvalerate) and of (2R)-2,3-dihydroxy-3-methylbutanoate (2,3-dihydroxyisovalerate) into 2-oxo-3-methylbutanoate (2-oxoisovalerate), the penultimate precursor to L-isoleucine and L-valine, respectively. This chain is Dihydroxy-acid dehydratase, found in Shewanella frigidimarina (strain NCIMB 400).